Here is a 187-residue protein sequence, read N- to C-terminus: Ribosome-recycling factor (187 aa).

This sequence belongs to the RRF family.

The protein localises to the cytoplasm. Its function is as follows. Responsible for the release of ribosomes from messenger RNA at the termination of protein biosynthesis. May increase the efficiency of translation by recycling ribosomes from one round of translation to another. This Lactiplantibacillus plantarum (strain ATCC BAA-793 / NCIMB 8826 / WCFS1) (Lactobacillus plantarum) protein is Ribosome-recycling factor.